Here is a 780-residue protein sequence, read N- to C-terminus: ATP-dependent 6-phosphofructokinase, liver type (780 aa).

At Ala-2 the chain carries N-acetylalanine. An N-terminal catalytic PFK domain 1 region spans residues Ala-2–His-390. Residues Gly-25, Arg-88 to Cys-89, and Gly-118 to Ser-121 contribute to the ATP site. Asp-119 is a Mg(2+) binding site. Substrate contacts are provided by residues Ser-164–Asp-166, Arg-201, Met-208–Arg-210, Glu-264, Arg-292, and His-298–Arg-301. The Proton acceptor role is filled by Asp-166. Position 377 is a phosphoserine (Ser-377). The segment at Gln-391 to Phe-400 is interdomain linker. Residues Ser-401–Phe-780 form a C-terminal regulatory PFK domain 2 region. Residues Arg-470, Thr-527–Asn-531, Arg-565, Met-572–Gly-574, and Glu-628 each bind beta-D-fructose 2,6-bisphosphate. An O-linked (GlcNAc) serine glycan is attached at Ser-529. Position 640 is a phosphotyrosine (Tyr-640). Beta-D-fructose 2,6-bisphosphate-binding positions include Arg-654, His-660–Gln-663, and Arg-734. Ser-775 carries the post-translational modification Phosphoserine.

This sequence belongs to the phosphofructokinase type A (PFKA) family. ATP-dependent PFK group I subfamily. Eukaryotic two domain clade 'E' sub-subfamily. In terms of assembly, homo- and heterotetramers. Phosphofructokinase (PFK) enzyme functions as a tetramer composed of different combinations of 3 types of subunits, called PFKM (M), PFKL (L) and PFKP (P). The composition of the PFK tetramer differs according to the tissue type it is present in. The kinetic and regulatory properties of the tetrameric enzyme are dependent on the subunit composition, hence can vary across tissues. Mg(2+) is required as a cofactor. GlcNAcylation at Ser-529 by OGT decreases enzyme activity, leading to redirect glucose flux through the oxidative pentose phosphate pathway. Glycosylation is stimulated by both hypoxia and glucose deprivation.

The protein localises to the cytoplasm. The enzyme catalyses beta-D-fructose 6-phosphate + ATP = beta-D-fructose 1,6-bisphosphate + ADP + H(+). It participates in carbohydrate degradation; glycolysis; D-glyceraldehyde 3-phosphate and glycerone phosphate from D-glucose: step 3/4. With respect to regulation, allosterically activated by ADP, AMP, or fructose 2,6-bisphosphate, and allosterically inhibited by ATP or citrate. GlcNAcylation by OGT overcomes allosteric regulation. Functionally, catalyzes the phosphorylation of D-fructose 6-phosphate to fructose 1,6-bisphosphate by ATP, the first committing step of glycolysis. Negatively regulates the phagocyte oxidative burst in response to bacterial infection by controlling cellular NADPH biosynthesis and NADPH oxidase-derived reactive oxygen species. Upon macrophage activation, drives the metabolic switch toward glycolysis, thus preventing glucose turnover that produces NADPH via pentose phosphate pathway. This is ATP-dependent 6-phosphofructokinase, liver type (PFKL) from Pongo abelii (Sumatran orangutan).